Reading from the N-terminus, the 273-residue chain is Nucleotide-binding protein TTHA0319 (273 aa).

ATP is bound at residue 8 to 15; it reads GLSGAGKT. Residue 57-60 coordinates GTP; it reads DARA.

It belongs to the RapZ-like family.

Functionally, displays ATPase and GTPase activities. The protein is Nucleotide-binding protein TTHA0319 of Thermus thermophilus (strain ATCC 27634 / DSM 579 / HB8).